Reading from the N-terminus, the 208-residue chain is CASP-like protein 2U9 (208 aa).

Topologically, residues 1–27 (MGVADAPSPGNVPVLGDMKNRSAAEMK) are cytoplasmic. A helical transmembrane segment spans residues 28-48 (ISVLALRALTLVLLVIALALM). Residues 49 to 87 (VSNKQTQSIPIKLPGMASTIFLKKTATFSQITGVQYYVG) lie on the Extracellular side of the membrane. The chain crosses the membrane as a helical span at residues 88–108 (ALSVAVAYMFFQMLAGLFTIL). The Cytoplasmic segment spans residues 109–120 (TTGSIVGSKSRA). A helical membrane pass occupies residues 121–141 (WVTFILDQLIAYLMVSAATVV). Residues 142 to 168 (AEVGYIARRGETKVGWNQVCSDFKHYC) are Extracellular-facing. Residues 169 to 189 (FIYGFSLVNAFLATIAFLPVV) form a helical membrane-spanning segment. Topologically, residues 190 to 208 (AVSAFHLFRMYGAQSAQSK) are cytoplasmic.

This sequence belongs to the Casparian strip membrane proteins (CASP) family. Homodimer and heterodimers.

It is found in the cell membrane. The sequence is that of CASP-like protein 2U9 from Selaginella moellendorffii (Spikemoss).